The chain runs to 805 residues: Transcription factor E2f1 (805 aa).

3 disordered regions span residues alanine 9–histidine 45, alanine 119–aspartate 208, and proline 224–alanine 255. Low complexity-rich tracts occupy residues asparagine 12–tyrosine 37 and alanine 119–glutamine 134. 2 stretches are compositionally biased toward polar residues: residues arginine 144–threonine 154 and histidine 181–proline 195. The PIP-box K+4 motif signature appears at threonine 147–arginine 161. Over residues alanine 240–serine 249 the composition is skewed to low complexity. A DNA-binding region spans residues asparagine 253–arginine 318. Positions arginine 318–isoleucine 411 are dimerization. Phosphoserine is present on serine 434. Disordered regions lie at residues serine 578–serine 650 and glycine 714–serine 743. Composition is skewed to low complexity over residues alanine 595 to asparagine 615 and serine 623 to serine 636. The span at glutamine 637 to glutamine 647 shows a compositional bias: polar residues.

The protein belongs to the E2F/DP family. Heterodimer of E2f and Dp. Cooperates to give sequence-specific DNA binding and optimal trans-activation. Interacts with PCNA. Post-translationally, ubiquitinated by the DCX(DTL) complex, also named CRL4(CDT2) complex, leading to its degradation during S phase. Ubiquitination by the DCX(DTL) complex is essential for cell cycle control and is PCNA-dependent: interacts with PCNA via its PIP-box, while the presence of the containing the 'K+4' motif in the PIP box, recruit the DCX(DTL) complex, leading to its degradation. Segmentally repeated expression throughout early embryos is restricted to the ventral nerve cord in later embryos.

Its subcellular location is the nucleus. In terms of biological role, transcriptional activator that binds to E2f sites. Required for wild-type growth in mitotic and polytene tissues, Contributes to the expression of replication genes at the G1-S transition and Cyclin E. Activates cell proliferation in wing imaginal disk, which requires expression of vg. The chain is Transcription factor E2f1 from Drosophila melanogaster (Fruit fly).